A 618-amino-acid chain; its full sequence is Beta-xylosidase (618 aa).

Disordered regions lie at residues 76–100 and 463–509; these read ERDRYTTDESDSGSSERHSVQQEES and LEPQ…PPIQ.

It belongs to the glycosyl hydrolase 52 family.

It is found in the secreted. The catalysed reaction is Hydrolysis of (1-&gt;4)-beta-D-xylans, to remove successive D-xylose residues from the non-reducing termini.. The protein operates within glycan degradation; xylan degradation. The chain is Beta-xylosidase (xylA) from Geobacillus stearothermophilus (Bacillus stearothermophilus).